The following is a 518-amino-acid chain: Chaperonin GroEL (518 aa).

ATP-binding positions include 30–33 (TLGP), lysine 51, 87–91 (DGTTT), and glycine 415.

The protein belongs to the chaperonin (HSP60) family. Forms a cylinder of 14 subunits composed of two heptameric rings stacked back-to-back. Interacts with the co-chaperonin GroES.

It is found in the cytoplasm. It catalyses the reaction ATP + H2O + a folded polypeptide = ADP + phosphate + an unfolded polypeptide.. In terms of biological role, together with its co-chaperonin GroES, plays an essential role in assisting protein folding. The GroEL-GroES system forms a nano-cage that allows encapsulation of the non-native substrate proteins and provides a physical environment optimized to promote and accelerate protein folding. This Desulfotalea psychrophila (strain LSv54 / DSM 12343) protein is Chaperonin GroEL.